A 505-amino-acid chain; its full sequence is Maturase K (505 aa).

Belongs to the intron maturase 2 family. MatK subfamily.

The protein localises to the plastid. The protein resides in the chloroplast. In terms of biological role, usually encoded in the trnK tRNA gene intron. Probably assists in splicing its own and other chloroplast group II introns. The polypeptide is Maturase K (Rhizophora stylosa (Bakau)).